The chain runs to 259 residues: Ribonuclease PH (259 aa).

Residues R88 and 126 to 128 (GTR) contribute to the phosphate site.

This sequence belongs to the RNase PH family. In terms of assembly, homohexameric ring arranged as a trimer of dimers.

The enzyme catalyses tRNA(n+1) + phosphate = tRNA(n) + a ribonucleoside 5'-diphosphate. Functionally, phosphorolytic 3'-5' exoribonuclease that plays an important role in tRNA 3'-end maturation. Removes nucleotide residues following the 3'-CCA terminus of tRNAs; can also add nucleotides to the ends of RNA molecules by using nucleoside diphosphates as substrates, but this may not be physiologically important. Probably plays a role in initiation of 16S rRNA degradation (leading to ribosome degradation) during starvation. This chain is Ribonuclease PH, found in Mycobacterium ulcerans (strain Agy99).